A 242-amino-acid chain; its full sequence is Venom nerve growth factor 3 (242 aa).

The first 18 residues, 1–18 (MSMLCYTLIIAFLIGIWA), serve as a signal peptide directing secretion. A propeptide spanning residues 19-125 (APQSEDNVPL…ALNRNIQAKR (107 aa)) is cleaved from the precursor. The interval 45–69 (HEGLKTSRNTDQRHPAPKKVDDQEP) is disordered. Residues 46-66 (EGLKTSRNTDQRHPAPKKVDD) show a composition bias toward basic and acidic residues. 3 disulfides stabilise this stretch: Cys-139–Cys-203, Cys-181–Cys-231, and Cys-191–Cys-233.

The protein belongs to the NGF-beta family. Homodimer; non-covalently linked. As to expression, expressed by the venom gland.

It localises to the secreted. In terms of biological role, nerve growth factor is important for the development and maintenance of the sympathetic and sensory nervous systems. It stimulates division and differentiation of sympathetic and embryonic sensory neurons as well as basal forebrain cholinergic neurons in the brain. Its relevance in the snake venom is not clear. However, it has been shown to inhibit metalloproteinase-dependent proteolysis of platelet glycoprotein Ib alpha, suggesting a metalloproteinase inhibition to prevent metalloprotease autodigestion and/or protection against prey proteases. Binds a lipid between the two protein chains in the homodimer. The lipid-bound form promotes histamine relase from mouse mast cells, contrary to the lipid-free form. The chain is Venom nerve growth factor 3 from Pseudechis australis (Mulga snake).